Here is a 249-residue protein sequence, read N- to C-terminus: Phosphate import ATP-binding protein PstB 2 (249 aa).

The 241-residue stretch at 4–244 (FEVTHLNLFY…PKDHRTQGYV (241 aa)) folds into the ABC transporter domain. 36–43 (GPSGCGKS) provides a ligand contact to ATP.

It belongs to the ABC transporter superfamily. Phosphate importer (TC 3.A.1.7) family. As to quaternary structure, the complex is composed of two ATP-binding proteins (PstB), two transmembrane proteins (PstC and PstA) and a solute-binding protein (PstS).

The protein resides in the cell inner membrane. It catalyses the reaction phosphate(out) + ATP + H2O = ADP + 2 phosphate(in) + H(+). Part of the ABC transporter complex PstSACB involved in phosphate import. Responsible for energy coupling to the transport system. This is Phosphate import ATP-binding protein PstB 2 from Shewanella oneidensis (strain ATCC 700550 / JCM 31522 / CIP 106686 / LMG 19005 / NCIMB 14063 / MR-1).